The following is a 204-amino-acid chain: Large ribosomal subunit protein uL4 (204 aa).

Positions 49 to 74 are disordered; that stretch reads AKKRGEVSGGGKKPWSQKGGGRARAG. A compositionally biased stretch (gly residues) spans 55–71; that stretch reads VSGGGKKPWSQKGGGRA.

This sequence belongs to the universal ribosomal protein uL4 family. In terms of assembly, part of the 50S ribosomal subunit.

One of the primary rRNA binding proteins, this protein initially binds near the 5'-end of the 23S rRNA. It is important during the early stages of 50S assembly. It makes multiple contacts with different domains of the 23S rRNA in the assembled 50S subunit and ribosome. Functionally, forms part of the polypeptide exit tunnel. The polypeptide is Large ribosomal subunit protein uL4 (Wolinella succinogenes (strain ATCC 29543 / DSM 1740 / CCUG 13145 / JCM 31913 / LMG 7466 / NCTC 11488 / FDC 602W) (Vibrio succinogenes)).